The chain runs to 36 residues: MITLNLPSILVPLVGLVFPAIAMASLFLHVQKNKIF.

The chain crosses the membrane as a helical span at residues 8–28 (SILVPLVGLVFPAIAMASLFL).

This sequence belongs to the PsaI family.

The protein resides in the plastid. It is found in the chloroplast thylakoid membrane. May help in the organization of the PsaL subunit. This Vitis vinifera (Grape) protein is Photosystem I reaction center subunit VIII.